A 452-amino-acid polypeptide reads, in one-letter code: MKVISNFQNKKILILGLAKSGEAAAKLLTKLGALVTVNDSKPFDQNPAAQALLEEGIKVICGSHPVELLDENFEYMVKNPGIPYDNPMVKRALAKEIPILTEVELAYFVSEAPIIGITGSNGKTTTTTMIADVLNAGGQSALLSGNIGYPASKVVQKAIAGDTLVMELSSFQLVGVNAFRPHIAVITNLMPTHLDYHGSFEDYVAAKWMIQAQMTESDYLILNANQEISATLAKTTKATVIPFSTQKVVDGAYLNDGILYFKEQAIIAATDLGVPGSHNIENALATIAVAKLSGIADDIIAQCLSHFGGVKHRLQRVGQIKDITFYNDSKSTNILATKKALSGFDNSRLILIAGGLDRGNEFDDLVPDLLGLKQMIILGESAERMKRAANKAEVSYLEARNVAEATELAFKLAQTGDTILLSPANASWDMYPNFEVRGDEFLATFDCLRGDA.

Residue G119 to T125 participates in ATP binding.

This sequence belongs to the MurCDEF family.

It is found in the cytoplasm. It carries out the reaction UDP-N-acetyl-alpha-D-muramoyl-L-alanine + D-glutamate + ATP = UDP-N-acetyl-alpha-D-muramoyl-L-alanyl-D-glutamate + ADP + phosphate + H(+). It functions in the pathway cell wall biogenesis; peptidoglycan biosynthesis. Its function is as follows. Cell wall formation. Catalyzes the addition of glutamate to the nucleotide precursor UDP-N-acetylmuramoyl-L-alanine (UMA). The sequence is that of UDP-N-acetylmuramoylalanine--D-glutamate ligase from Streptococcus pyogenes serotype M12 (strain MGAS9429).